A 549-amino-acid polypeptide reads, in one-letter code: MTSVTDHSAHSMERAAEHTINIHTTAGKLAELHKRTEEALHPVGAAAFEKVHAKGKFTARERIYALLDDDSFVELDALARHRSTNFGLGENRPVGDGVVTGYGTIDGRDVCIFSQDVTVFGGSLGEVYGEKIVKVQELAIKTGRPLIGINDGAGARIQEGVVSLGLYSRIFRNNILASGVIPQISLIMGAAAGGHVYSPALTDFVVMVDQTSQMFITGPDVIKTVTGEDVTMEELGGAHTHMAKSGTAHYVASGEQDAFDWVRDVLSYLPSNNFTDAPRYSKPVPHGSIEDNLTAKDLELDTLIPDSPNQPYDMHEVVTRLLDEEEFLEVQAGYATNIVVGLGRIDDRPVGIVANQPIQFAGCLDINASEKAARFVRVCDCFNIPIVMLVDVPGFLPGTEQEYDGIIRRGAKLLFAYGEATVPKITVITRKAYGGAYCVMGSKNMGCDVNLAWPTAQIAVMGASGAVGFVYRKELAQAAKNGANVDELRLQLQQEYEDTLVNPYIAAERGYVDAVIPPSHTRGYIATALHLLERKIAHLPPKKHGNIPL.

A CoA carboxyltransferase N-terminal domain is found at 25–281; that stretch reads TAGKLAELHK…NNFTDAPRYS (257 aa). Positions 295-542 constitute a CoA carboxyltransferase C-terminal domain; it reads AKDLELDTLI…ERKIAHLPPK (248 aa).

The protein belongs to the AccD/PCCB family. In terms of assembly, the biotin-dependent acyl-CoA carboxylase complex is composed of AccA3, which contains the biotin carboxylase (BC) and biotin carboxyl carrier protein (BCCP) domains, and AccD5, which contains the carboxyl transferase (CT) domain.

It carries out the reaction N(6)-carboxybiotinyl-L-lysyl-[protein] + acetyl-CoA = N(6)-biotinyl-L-lysyl-[protein] + malonyl-CoA. It catalyses the reaction N(6)-carboxybiotinyl-L-lysyl-[protein] + propanoyl-CoA = methylmalonyl-CoA + N(6)-biotinyl-L-lysyl-[protein]. Its pathway is lipid metabolism; mycolic acid biosynthesis. In terms of biological role, component of a biotin-dependent acyl-CoA carboxylase complex. This subunit transfers the CO2 from carboxybiotin to the CoA ester substrate. When associated with the alpha3 subunit AccA3, is involved in the carboxylation of acetyl-CoA and propionyl-CoA. This is Biotin-dependent acetyl-/propionyl-coenzyme A carboxylase beta5 subunit (accD5) from Mycobacterium leprae (strain TN).